A 396-amino-acid polypeptide reads, in one-letter code: S-adenosylmethionine synthase 1 (396 aa).

Glutamate 12 contributes to the Mg(2+) binding site. Histidine 18 contributes to the ATP binding site. K(+) is bound at residue glutamate 46. Residues glutamate 59 and glutamine 102 each coordinate L-methionine. ATP is bound by residues 170-172 (DGK), 238-241 (SGRF), aspartate 249, 255-256 (RK), alanine 272, lysine 276, and lysine 280. Aspartate 249 provides a ligand contact to L-methionine. An L-methionine-binding site is contributed by lysine 280.

This sequence belongs to the AdoMet synthase family. As to quaternary structure, homotetramer. Mn(2+) is required as a cofactor. Requires Mg(2+) as cofactor. The cofactor is Co(2+). It depends on K(+) as a cofactor.

It is found in the cytoplasm. It catalyses the reaction L-methionine + ATP + H2O = S-adenosyl-L-methionine + phosphate + diphosphate. It participates in amino-acid biosynthesis; S-adenosyl-L-methionine biosynthesis; S-adenosyl-L-methionine from L-methionine: step 1/1. Functionally, catalyzes the formation of S-adenosylmethionine from methionine and ATP. The reaction comprises two steps that are both catalyzed by the same enzyme: formation of S-adenosylmethionine (AdoMet) and triphosphate, and subsequent hydrolysis of the triphosphate. This chain is S-adenosylmethionine synthase 1 (SAM1), found in Oryza sativa subsp. japonica (Rice).